A 376-amino-acid chain; its full sequence is MTYTTFSKNKNNQLYEPMFFGQSVNISRYDQQKYEIFEKLIEKQLSFFWRPEEVDLSRDYIDFQNLPQHEKHIFVSNLKYQTLLDSIQGRSPNIALLPIVSLPELETWIETWSFSETIHSRSYTHIIRNIINTPSLIFDDIIDNKNIANRAKDIAKYYDDLIELTSYWHLFGEGKHTINGKKIKIDLHELKKKLYLCLISVNALEAIRFYVSFACSFAFAEREKMEGNAKIIRLIARDEALHLTSTQHILNILHNDKNNEGMSDISKECYEECYHLFIRVSDQEKIWAKYLFQNGSMLGLNQEILSQYIEYITNIRMKAIGLPSPFKILSNPIPWINSWLISDNVQVAPQEISVSSYLIGQINSEINDSDFEKFKL.

The Fe cation site is built by aspartate 85, glutamate 116, and histidine 119. Tyrosine 123 is an active-site residue. The Fe cation site is built by glutamate 205, glutamate 239, and histidine 242.

This sequence belongs to the ribonucleoside diphosphate reductase small chain family. As to quaternary structure, tetramer of two alpha and two beta subunits. It depends on Fe cation as a cofactor.

It carries out the reaction a 2'-deoxyribonucleoside 5'-diphosphate + [thioredoxin]-disulfide + H2O = a ribonucleoside 5'-diphosphate + [thioredoxin]-dithiol. Functionally, provides the precursors necessary for DNA synthesis. Catalyzes the biosynthesis of deoxyribonucleotides from the corresponding ribonucleotides. The polypeptide is Ribonucleoside-diphosphate reductase subunit beta (nrdB) (Buchnera aphidicola subsp. Baizongia pistaciae (strain Bp)).